The following is a 448-amino-acid chain: Phosphoglucosamine mutase (448 aa).

Ser-104 functions as the Phosphoserine intermediate in the catalytic mechanism. Mg(2+) contacts are provided by Ser-104, Asp-241, Asp-243, and Asp-245. Phosphoserine is present on Ser-104.

It belongs to the phosphohexose mutase family. It depends on Mg(2+) as a cofactor. Post-translationally, activated by phosphorylation.

It catalyses the reaction alpha-D-glucosamine 1-phosphate = D-glucosamine 6-phosphate. In terms of biological role, catalyzes the conversion of glucosamine-6-phosphate to glucosamine-1-phosphate. This is Phosphoglucosamine mutase from Nocardioides sp. (strain ATCC BAA-499 / JS614).